The following is a 194-amino-acid chain: Inosine triphosphate pyrophosphatase (194 aa).

10 to 15 (TSSKKK) contacts ITP. A Mg(2+)-binding site is contributed by glutamate 37. ITP-binding positions include lysine 49, 65 to 66 (DV), lysine 82, 142 to 145 (FGWD), lysine 166, and 171 to 172 (HR).

The protein belongs to the HAM1 NTPase family. In terms of assembly, homodimer. Requires Mg(2+) as cofactor. Mn(2+) serves as cofactor.

Its subcellular location is the cytoplasm. It carries out the reaction ITP + H2O = IMP + diphosphate + H(+). The catalysed reaction is dITP + H2O = dIMP + diphosphate + H(+). It catalyses the reaction XTP + H2O = XMP + diphosphate + H(+). Its function is as follows. Pyrophosphatase that hydrolyzes non-canonical purine nucleotides such as inosine triphosphate (ITP), deoxyinosine triphosphate (dITP) or xanthosine 5'-triphosphate (XTP) to their respective monophosphate derivatives. The enzyme does not distinguish between the deoxy- and ribose forms. Probably excludes non-canonical purines from RNA and DNA precursor pools, thus preventing their incorporation into RNA and DNA and avoiding chromosomal lesions. The chain is Inosine triphosphate pyrophosphatase from Giardia intestinalis (strain ATCC 50803 / WB clone C6) (Giardia lamblia).